The chain runs to 429 residues: UDP-N-acetylglucosamine 1-carboxyvinyltransferase 2 (429 aa).

22 to 23 (KN) provides a ligand contact to phosphoenolpyruvate. Residue Arg-93 coordinates UDP-N-acetyl-alpha-D-glucosamine. Cys-117 (proton donor) is an active-site residue. At Cys-117 the chain carries 2-(S-cysteinyl)pyruvic acid O-phosphothioketal. UDP-N-acetyl-alpha-D-glucosamine is bound by residues 122–126 (RPIDQ), Asp-305, and Ile-327.

Belongs to the EPSP synthase family. MurA subfamily.

The protein localises to the cytoplasm. The enzyme catalyses phosphoenolpyruvate + UDP-N-acetyl-alpha-D-glucosamine = UDP-N-acetyl-3-O-(1-carboxyvinyl)-alpha-D-glucosamine + phosphate. It participates in cell wall biogenesis; peptidoglycan biosynthesis. Its function is as follows. Cell wall formation. Adds enolpyruvyl to UDP-N-acetylglucosamine. This Bacillus cereus (strain ATCC 14579 / DSM 31 / CCUG 7414 / JCM 2152 / NBRC 15305 / NCIMB 9373 / NCTC 2599 / NRRL B-3711) protein is UDP-N-acetylglucosamine 1-carboxyvinyltransferase 2.